Consider the following 309-residue polypeptide: Ribosomal RNA small subunit methyltransferase H (309 aa).

S-adenosyl-L-methionine is bound by residues 33–35 (GGH), Asp53, Phe79, Asp100, and Gln107.

The protein belongs to the methyltransferase superfamily. RsmH family.

It localises to the cytoplasm. It carries out the reaction cytidine(1402) in 16S rRNA + S-adenosyl-L-methionine = N(4)-methylcytidine(1402) in 16S rRNA + S-adenosyl-L-homocysteine + H(+). In terms of biological role, specifically methylates the N4 position of cytidine in position 1402 (C1402) of 16S rRNA. This Clostridium botulinum (strain Langeland / NCTC 10281 / Type F) protein is Ribosomal RNA small subunit methyltransferase H.